Here is a 245-residue protein sequence, read N- to C-terminus: Orotidine 5'-phosphate decarboxylase (245 aa).

Substrate-binding positions include aspartate 22, lysine 44, 71–80, threonine 131, arginine 192, glutamine 201, glycine 221, and arginine 222; that span reads DLKFHDIPNT. Catalysis depends on lysine 73, which acts as the Proton donor.

This sequence belongs to the OMP decarboxylase family. Type 1 subfamily. Homodimer.

It carries out the reaction orotidine 5'-phosphate + H(+) = UMP + CO2. The protein operates within pyrimidine metabolism; UMP biosynthesis via de novo pathway; UMP from orotate: step 2/2. In terms of biological role, catalyzes the decarboxylation of orotidine 5'-monophosphate (OMP) to uridine 5'-monophosphate (UMP). This is Orotidine 5'-phosphate decarboxylase from Escherichia coli (strain 55989 / EAEC).